The primary structure comprises 523 residues: UDP-glucuronosyltransferase 3A1 (523 aa).

A signal peptide spans 1 to 23 (MAVGRKSLILSLLIQHFVLLHGA). Topologically, residues 24 to 483 (KILTVCFLGG…YSYQQPLYQQ (460 aa)) are extracellular. Residue Asn125 is glycosylated (N-linked (GlcNAc...) asparagine). A helical membrane pass occupies residues 484–504 (YLLDVFLFVCVCVIGACYLTV). Residues 505-523 (KLLKMFIQKLCSFRKLKQN) lie on the Cytoplasmic side of the membrane.

It belongs to the UDP-glycosyltransferase family.

The protein resides in the membrane. It carries out the reaction glucuronate acceptor + UDP-alpha-D-glucuronate = acceptor beta-D-glucuronoside + UDP + H(+). In terms of biological role, UDP-glucuronosyltransferases catalyze phase II biotransformation reactions in which lipophilic substrates are conjugated with glucuronic acid to increase water solubility and enhance excretion. They are of major importance in the conjugation and subsequent elimination of potentially toxic xenobiotics and endogenous compounds. This is UDP-glucuronosyltransferase 3A1 (ugt3a1) from Xenopus laevis (African clawed frog).